A 259-amino-acid chain; its full sequence is Insulin-like growth factor-binding protein 1 (259 aa).

The first 25 residues, 1 to 25 (MSEVPVARVWLVLLLLTVQVGVTAG), serve as a signal peptide directing secretion. The region spanning 26–107 (APWQCAPCSA…TRGQGACVQE (82 aa)) is the IGFBP N-terminal domain. Cystine bridges form between Cys30-Cys57, Cys33-Cys59, Cys41-Cys60, Cys48-Cys63, Cys71-Cys84, and Cys78-Cys104. Ser45 bears the Phosphoserine; by FAM20C mark. 4 positions are modified to phosphoserine: Ser120, Ser123, Ser126, and Ser144. Position 156 is a phosphoserine; by FAM20C (Ser156). Residue Thr157 is modified to Phosphothreonine; by FAM20C. Residue Tyr158 is modified to Phosphotyrosine. Residues 173–251 (KEPCRIELYR…SPEIRGDPNC (79 aa)) enclose the Thyroglobulin type-1 domain. Intrachain disulfides connect Cys176–Cys206, Cys217–Cys228, and Cys230–Cys251. At Thr193 the chain carries Phosphothreonine; by FAM20C. 2 positions are modified to phosphoserine; by FAM20C: Ser194 and Ser199. Ser242 carries the phosphoserine; by FAM20C modification. Residues 246–248 (RGD) carry the Cell attachment site motif.

Binds equally well IGF1 and IGF2. Interacts with integrin ITGA5:ITGB1. Interacts with VHL; this interaction inhibits HIF1A degradation. Post-translationally, phosphorylated; probably by casein kinase II. Phosphorylation alters the affinity of the protein for IGFs. In amniotic fluid, the unmodified protein is the most abundant form, while mono-, bi-, tri- and tetraphosphorylated forms are present in decreasing amounts. The phosphorylation state may influence the propensity to proteolysis.

It localises to the secreted. Multifunctional protein that plays a critical role in regulating the availability of IGFs such as IGF1 and IGF2 to their receptors and thereby regulates IGF-mediated cellular processes including cell migration, proliferation, differentiation or apoptosis in a cell-type specific manner. Also plays a positive role in cell migration by interacting with integrin ITGA5:ITGB1 through its RGD motif. Mechanistically, binding to integrins leads to activation of focal adhesion kinase/PTK2 and stimulation of the mitogen-activated protein kinase (MAPK) pathway. Regulates cardiomyocyte apoptosis by suppressing HIF-1alpha/HIF1A ubiquitination and subsequent degradation. The polypeptide is Insulin-like growth factor-binding protein 1 (IGFBP1) (Homo sapiens (Human)).